We begin with the raw amino-acid sequence, 349 residues long: Protein-glutamate methylesterase/protein-glutamine glutaminase 1 (349 aa).

Residues 4–119 (RILVVDDSAV…KGFLEDSARR (116 aa)) form the Response regulatory domain. Residue D53 is modified to 4-aspartylphosphate. The 191-residue stretch at 159–349 (PRAGRAELVV…VASAVLAWAR (191 aa)) folds into the CheB-type methylesterase domain. Active-site residues include S172, H198, and D293.

This sequence belongs to the CheB family. In terms of processing, phosphorylated by CheA. Phosphorylation of the N-terminal regulatory domain activates the methylesterase activity.

It is found in the cytoplasm. The enzyme catalyses [protein]-L-glutamate 5-O-methyl ester + H2O = L-glutamyl-[protein] + methanol + H(+). It carries out the reaction L-glutaminyl-[protein] + H2O = L-glutamyl-[protein] + NH4(+). Functionally, involved in chemotaxis. Part of a chemotaxis signal transduction system that modulates chemotaxis in response to various stimuli. Catalyzes the demethylation of specific methylglutamate residues introduced into the chemoreceptors (methyl-accepting chemotaxis proteins or MCP) by CheR. Also mediates the irreversible deamidation of specific glutamine residues to glutamic acid. This Anaeromyxobacter dehalogenans (strain 2CP-C) protein is Protein-glutamate methylesterase/protein-glutamine glutaminase 1.